The chain runs to 175 residues: Ferritin light chain (175 aa).

An N-acetylserine modification is found at S2. The 150-residue stretch at 7–156 folds into the Ferritin-like diiron domain; sequence QNYSTDVEAA…DHLTNLHRLG (150 aa). E54, E57, E58, E61, and E64 together coordinate Fe cation. The catalytic site for iron oxidation stretch occupies residues 54 to 61; sequence ELAEEKRE.

It belongs to the ferritin family. In terms of assembly, oligomer of 24 subunits. There are two types of subunits: L (light) chain and H (heavy) chain. The major chain can be light or heavy, depending on the species and tissue type. The functional molecule forms a roughly spherical shell with a diameter of 12 nm and contains a central cavity into which the insoluble mineral iron core is deposited. Interacts with NCOA4.

It is found in the cytoplasmic vesicle. The protein localises to the autophagosome. The protein resides in the cytoplasm. It localises to the autolysosome. In terms of biological role, stores iron in a soluble, non-toxic, readily available form. Important for iron homeostasis. Iron is taken up in the ferrous form and deposited as ferric hydroxides after oxidation. Also plays a role in delivery of iron to cells. Mediates iron uptake in capsule cells of the developing kidney. Delivery to lysosomes by the cargo receptor NCOA4 for autophagic degradation and release or iron. This Pongo abelii (Sumatran orangutan) protein is Ferritin light chain (FTL).